The following is a 76-amino-acid chain: Acyl carrier protein (76 aa).

A Carrier domain is found at 1-76; that stretch reads MSIEERVKKI…SAIDYVQNNQ (76 aa). An O-(pantetheine 4'-phosphoryl)serine modification is found at Ser36.

This sequence belongs to the acyl carrier protein (ACP) family. 4'-phosphopantetheine is transferred from CoA to a specific serine of apo-ACP by AcpS. This modification is essential for activity because fatty acids are bound in thioester linkage to the sulfhydryl of the prosthetic group.

The protein resides in the cytoplasm. It functions in the pathway lipid metabolism; fatty acid biosynthesis. Functionally, carrier of the growing fatty acid chain in fatty acid biosynthesis. This Mannheimia succiniciproducens (strain KCTC 0769BP / MBEL55E) protein is Acyl carrier protein.